Reading from the N-terminus, the 174-residue chain is Gamma-crystallin M3 (174 aa).

2 Beta/gamma crystallin 'Greek key' domains span residues 2-40 and 41-82; these read GKII…RVES and GCFV…RMVP. A connecting peptide region spans residues 83–87; it reads QYRGP. 2 consecutive Beta/gamma crystallin 'Greek key' domains span residues 88-128 and 129-171; these read YRMR…HVMD and GHWL…RRIM.

The protein belongs to the beta/gamma-crystallin family. Monomer.

Functionally, crystallins are the dominant structural components of the vertebrate eye lens. This Cyprinus carpio (Common carp) protein is Gamma-crystallin M3.